The sequence spans 200 residues: Pyridoxal 5'-phosphate synthase subunit PdxT (200 aa).

52–54 (GES) lines the L-glutamine pocket. The active-site Nucleophile is Cys84. L-glutamine-binding positions include Arg115 and 143–144 (IR). Residues His179 and Glu181 each act as charge relay system in the active site.

The protein belongs to the glutaminase PdxT/SNO family. In the presence of PdxS, forms a dodecamer of heterodimers. Only shows activity in the heterodimer.

The catalysed reaction is aldehydo-D-ribose 5-phosphate + D-glyceraldehyde 3-phosphate + L-glutamine = pyridoxal 5'-phosphate + L-glutamate + phosphate + 3 H2O + H(+). The enzyme catalyses L-glutamine + H2O = L-glutamate + NH4(+). The protein operates within cofactor biosynthesis; pyridoxal 5'-phosphate biosynthesis. In terms of biological role, catalyzes the hydrolysis of glutamine to glutamate and ammonia as part of the biosynthesis of pyridoxal 5'-phosphate. The resulting ammonia molecule is channeled to the active site of PdxS. The chain is Pyridoxal 5'-phosphate synthase subunit PdxT from Methanosarcina barkeri (strain Fusaro / DSM 804).